Reading from the N-terminus, the 304-residue chain is Aspartate carbamoyltransferase catalytic subunit (304 aa).

Positions 49 and 50 each coordinate carbamoyl phosphate. An L-aspartate-binding site is contributed by lysine 77. The carbamoyl phosphate site is built by arginine 99, histidine 127, and glutamine 130. The L-aspartate site is built by arginine 160 and arginine 211. Carbamoyl phosphate is bound by residues alanine 252 and proline 253.

This sequence belongs to the aspartate/ornithine carbamoyltransferase superfamily. ATCase family. As to quaternary structure, heterododecamer (2C3:3R2) of six catalytic PyrB chains organized as two trimers (C3), and six regulatory PyrI chains organized as three dimers (R2).

The enzyme catalyses carbamoyl phosphate + L-aspartate = N-carbamoyl-L-aspartate + phosphate + H(+). Its pathway is pyrimidine metabolism; UMP biosynthesis via de novo pathway; (S)-dihydroorotate from bicarbonate: step 2/3. Functionally, catalyzes the condensation of carbamoyl phosphate and aspartate to form carbamoyl aspartate and inorganic phosphate, the committed step in the de novo pyrimidine nucleotide biosynthesis pathway. In Bacillus cytotoxicus (strain DSM 22905 / CIP 110041 / 391-98 / NVH 391-98), this protein is Aspartate carbamoyltransferase catalytic subunit.